A 356-amino-acid chain; its full sequence is L-Ala-D/L-Glu epimerase (356 aa).

161–163 (KVK) is a binding site for substrate. Positions 191, 219, and 244 each coordinate Mg(2+). Substrate contacts are provided by residues lysine 268 and 320–322 (DLD).

It belongs to the mandelate racemase/muconate lactonizing enzyme family. The cofactor is Mg(2+).

The catalysed reaction is L-alanyl-L-glutamate = L-alanyl-D-glutamate. Dipeptide epimerase with a preference for substrates containing a Glu residue in the second position. Catalyzes the epimerization of L-Ala-L-Glu, L-Ser-L-Glu, L-Thr-L-Glu, L-Val-L-Glu, L-Gly-L-Glu and L-Thr-L-Glu (in vitro). May play a role in the metabolism of the murein peptide, of which L-Ala-D-Glu is a component. The protein is L-Ala-D/L-Glu epimerase of Francisella tularensis subsp. novicida (strain U112).